Here is an 89-residue protein sequence, read N- to C-terminus: Large ribosomal subunit protein bL31B (89 aa).

This sequence belongs to the bacterial ribosomal protein bL31 family. Type B subfamily. Part of the 50S ribosomal subunit.

The protein is Large ribosomal subunit protein bL31B of Pseudomonas fluorescens (strain ATCC BAA-477 / NRRL B-23932 / Pf-5).